A 523-amino-acid chain; its full sequence is REST corepressor 2 (523 aa).

Residues 1 to 43 (MPSVMEKPSAGSGILSRSRAKTAPNGGQPHSEDDSSEEEHSHD) are disordered. The segment covering 30–43 (HSEDDSSEEEHSHD) has biased composition (basic and acidic residues). A phosphoserine mark is found at serine 31, serine 35, serine 36, and serine 63. The ELM2 domain occupies 44–129 (SMIRVGTNYQ…KSLADLANFT (86 aa)). Residue lysine 88 forms a Glycyl lysine isopeptide (Lys-Gly) (interchain with G-Cter in SUMO2) linkage. Positions 130 to 181 (PFPDEWTVEDKVLFEQAFGFHGKCFQRIQQMLPDKLIPSLVKYYYSWKKTRS) constitute an SANT 1 domain. The interval 185–265 (VMDRQARRLG…RRRPPKGMYL (81 aa)) is disordered. At serine 202 the chain carries Phosphoserine. The span at 248 to 260 (YRHHPLRTRRRPP) shows a compositional bias: basic residues. Residues 283-314 (TLRGLDSQLISLKRQVQSMKQTNSSLRQALEG) are a coiled coil. Residues 327-378 (KFNSRWTTDEQLLAVQAIRRYGKDFGAIAEVIGNKTLTQVKTFFVSYRRRFN) form the SANT 2 domain. The disordered stretch occupies residues 387-523 (EAEQDGAPTA…AQLEPPAPSL (137 aa)). Residues 432–459 (SVPPAPPPPPPPTSLSQPPPLLRPPLPT) show a composition bias toward pro residues. Positions 460-482 (APTLLRQPPPLQQGRFLQPRLAP) are enriched in low complexity. The residue at position 479 (arginine 479) is an Asymmetric dimethylarginine.

Belongs to the CoREST family.

Its subcellular location is the nucleus. Functionally, may act as a component of a corepressor complex that represses transcription. The sequence is that of REST corepressor 2 (Rcor2) from Rattus norvegicus (Rat).